The following is a 76-amino-acid chain: Small ribosomal subunit protein bS18 (76 aa).

It belongs to the bacterial ribosomal protein bS18 family. In terms of assembly, part of the 30S ribosomal subunit. Forms a tight heterodimer with protein bS6.

Its function is as follows. Binds as a heterodimer with protein bS6 to the central domain of the 16S rRNA, where it helps stabilize the platform of the 30S subunit. This is Small ribosomal subunit protein bS18 from Xylella fastidiosa (strain 9a5c).